The sequence spans 38 residues: Large ribosomal subunit protein bL36A (38 aa).

Belongs to the bacterial ribosomal protein bL36 family.

This is Large ribosomal subunit protein bL36A from Prochlorococcus marinus (strain MIT 9515).